The sequence spans 82 residues: MDPIISAASVIGAGLSIGLAAIGPGIGQGTAAGQAVEGIARQPEAENKIRGVLLLSLAFMEALTIYGLVVALALLFANPFNT.

2 helical membrane-spanning segments follow: residues 3–23 (PIIS…AAIG) and 57–77 (LAFM…LLFA).

This sequence belongs to the ATPase C chain family. As to quaternary structure, F-type ATPases have 2 components, F(1) - the catalytic core - and F(0) - the membrane proton channel. F(1) has five subunits: alpha(3), beta(3), gamma(1), delta(1), epsilon(1). F(0) has four main subunits: a(1), b(1), b'(1) and c(10-14). The alpha and beta chains form an alternating ring which encloses part of the gamma chain. F(1) is attached to F(0) by a central stalk formed by the gamma and epsilon chains, while a peripheral stalk is formed by the delta, b and b' chains.

Its subcellular location is the plastid. It localises to the chloroplast thylakoid membrane. In terms of biological role, f(1)F(0) ATP synthase produces ATP from ADP in the presence of a proton or sodium gradient. F-type ATPases consist of two structural domains, F(1) containing the extramembraneous catalytic core and F(0) containing the membrane proton channel, linked together by a central stalk and a peripheral stalk. During catalysis, ATP synthesis in the catalytic domain of F(1) is coupled via a rotary mechanism of the central stalk subunits to proton translocation. Key component of the F(0) channel; it plays a direct role in translocation across the membrane. A homomeric c-ring of between 10-14 subunits forms the central stalk rotor element with the F(1) delta and epsilon subunits. This is ATP synthase subunit c, chloroplastic from Phaeodactylum tricornutum (strain CCAP 1055/1).